Here is a 197-residue protein sequence, read N- to C-terminus: MATRGGPMVAGTDGNDFEFRQRVAGTYQISLLNKSRLKYCIFFHALLFFVMLAKLTSDILDRLDIFVLEIEELEVPSPLWWEYVWAGSLLTSFLGLSAARGNKVREMQKYMIAILVFAILPLLYCFAYYFSDVWEFATMDKSVELDETDIFIWRGYPYGVFWYAFCFVGFQVHGFTLYFAYNLVKVWKARTATRKFQ.

Residues 1–39 (MATRGGPMVAGTDGNDFEFRQRVAGTYQISLLNKSRLKY) are Cytoplasmic-facing. A helical transmembrane segment spans residues 40-60 (CIFFHALLFFVMLAKLTSDIL). Over 61–78 (DRLDIFVLEIEELEVPSP) the chain is Lumenal. The chain crosses the membrane as a helical span at residues 79-99 (LWWEYVWAGSLLTSFLGLSAA). The Cytoplasmic segment spans residues 100 to 109 (RGNKVREMQK). Residues 110–130 (YMIAILVFAILPLLYCFAYYF) traverse the membrane as a helical segment. At 131–159 (SDVWEFATMDKSVELDETDIFIWRGYPYG) the chain is on the lumenal side. A helical transmembrane segment spans residues 160–180 (VFWYAFCFVGFQVHGFTLYFA). Residues 181-197 (YNLVKVWKARTATRKFQ) are Cytoplasmic-facing.

Belongs to the jagunal family.

It localises to the endoplasmic reticulum membrane. In terms of biological role, required for endoplasmic reticulum organization and proper vesicular traffic during vitellogenesis. Required for oocyte and bristle growth. The sequence is that of Protein jagunal from Drosophila pseudoobscura pseudoobscura (Fruit fly).